A 360-amino-acid chain; its full sequence is Peptide chain release factor 1 (360 aa).

Gln-235 is modified (N5-methylglutamine). A compositionally biased stretch (basic and acidic residues) spans 283-293; it reads EREAQAKEASA. The interval 283 to 305 is disordered; the sequence is EREAQAKEASARKSLIGSGDRSD.

The protein belongs to the prokaryotic/mitochondrial release factor family. In terms of processing, methylated by PrmC. Methylation increases the termination efficiency of RF1.

The protein resides in the cytoplasm. Its function is as follows. Peptide chain release factor 1 directs the termination of translation in response to the peptide chain termination codons UAG and UAA. The protein is Peptide chain release factor 1 of Ralstonia pickettii (strain 12J).